The following is a 256-amino-acid chain: Nuclear shuttle protein (256 aa).

Positions 18 to 39 match the Bipartite nuclear localization signal motif; that stretch reads NITNRYPIKRKYVAGHTRPCVR. The Nuclear localization signal motif lies at 81–96; the sequence is SRGPSGDGRSRDYIKL. Residues 150 to 187 are interaction with Arabidopsis thaliana NSI protein; it reads ELFGPYSACYVNLRLLNNQQHRYRVLHSVKRFVSSSGD.

This sequence belongs to the begomovirus nuclear shuttle protein family. Binds to single-stranded and double-stranded viral DNA. Interacts with the host nuclear shuttle interacting (NSI) protein. This interaction may allow NSP to recruit NSI monomers to the viral genome and thus regulate nuclear export of viral genome by NSP.

It is found in the host nucleus. Its subcellular location is the host cytoplasm. The protein resides in the host cell membrane. Its function is as follows. Binds to the genomic viral ssDNA, shuttles it into and out of the cell nucleus. Begomoviruses use 2 proteins to transport their DNA from cell to cell. The nuclear shuttle protein (NSP) shuttles it between nucleus and cytoplasm and the movement protein (MP) probably transports the DNA-NSP complex to the cell periphery and facilitates movement across the cell wall. This is Nuclear shuttle protein from Hewittia sublobata (Coralbush).